The primary structure comprises 466 residues: Adenosylhomocysteinase (466 aa).

Residues threonine 57, aspartate 132, and glutamate 192 each coordinate substrate. 193–195 (TTT) is an NAD(+) binding site. Substrate-binding residues include lysine 222 and aspartate 226. NAD(+)-binding positions include asparagine 227, 256-261 (GYGDVG), glutamate 279, asparagine 314, 335-337 (IGH), and asparagine 380.

It belongs to the adenosylhomocysteinase family. NAD(+) serves as cofactor.

It is found in the cytoplasm. The enzyme catalyses S-adenosyl-L-homocysteine + H2O = L-homocysteine + adenosine. It participates in amino-acid biosynthesis; L-homocysteine biosynthesis; L-homocysteine from S-adenosyl-L-homocysteine: step 1/1. May play a key role in the regulation of the intracellular concentration of adenosylhomocysteine. This Brucella melitensis biotype 2 (strain ATCC 23457) protein is Adenosylhomocysteinase.